The sequence spans 289 residues: ATP phosphoribosyltransferase (289 aa).

The protein belongs to the ATP phosphoribosyltransferase family. Long subfamily. The cofactor is Mg(2+).

It localises to the cytoplasm. The enzyme catalyses 1-(5-phospho-beta-D-ribosyl)-ATP + diphosphate = 5-phospho-alpha-D-ribose 1-diphosphate + ATP. Its pathway is amino-acid biosynthesis; L-histidine biosynthesis; L-histidine from 5-phospho-alpha-D-ribose 1-diphosphate: step 1/9. Feedback inhibited by histidine. Its function is as follows. Catalyzes the condensation of ATP and 5-phosphoribose 1-diphosphate to form N'-(5'-phosphoribosyl)-ATP (PR-ATP). Has a crucial role in the pathway because the rate of histidine biosynthesis seems to be controlled primarily by regulation of HisG enzymatic activity. This is ATP phosphoribosyltransferase from Methanosarcina acetivorans (strain ATCC 35395 / DSM 2834 / JCM 12185 / C2A).